The following is a 526-amino-acid chain: NAD(P)H-quinone oxidoreductase chain 4 2 (526 aa).

The next 14 helical transmembrane spans lie at 6-26 (FPWL…LPLI), 36-56 (WYAL…FYTG), 91-111 (LILL…PVSF), 113-133 (PKLF…VFAV), 137-157 (LLFF…LSIW), 169-189 (FILY…TMAF), 212-232 (LLLY…FPLH), 243-263 (TAPA…YALL), 275-295 (ALFG…AALT), 306-326 (IAYS…SFTD), 332-352 (AMLQ…MVGA), 375-397 (IFAM…GFVA), 417-437 (VIIV…LLSM), and 464-484 (VFVI…PKAV).

It belongs to the complex I subunit 4 family.

It localises to the cellular thylakoid membrane. The enzyme catalyses a plastoquinone + NADH + (n+1) H(+)(in) = a plastoquinol + NAD(+) + n H(+)(out). It catalyses the reaction a plastoquinone + NADPH + (n+1) H(+)(in) = a plastoquinol + NADP(+) + n H(+)(out). Functionally, NDH-1 shuttles electrons from NAD(P)H, via FMN and iron-sulfur (Fe-S) centers, to quinones in the respiratory chain. The immediate electron acceptor for the enzyme in this species is believed to be plastoquinone. Couples the redox reaction to proton translocation (for every two electrons transferred, four hydrogen ions are translocated across the cytoplasmic membrane), and thus conserves the redox energy in a proton gradient. This Picosynechococcus sp. (strain ATCC 27264 / PCC 7002 / PR-6) (Agmenellum quadruplicatum) protein is NAD(P)H-quinone oxidoreductase chain 4 2.